The sequence spans 425 residues: Histone-binding protein RBBP7 (425 aa).

7 WD repeats span residues 47-122 (QWLP…KINH), 128-173 (RARY…LRLR), 181-217 (GLSW…KVVD), 228-269 (VVED…HSVD), 275-312 (VNCL…LHSF), 318-369 (EIFQ…LFIH), and 376-403 (ISDF…IWQM).

This sequence belongs to the WD repeat RBAP46/RBAP48/MSI1 family. Binds directly to helix 1 of the histone fold of histone H4, a region that is not accessible when H4 is in chromatin.

It localises to the nucleus. Its function is as follows. Core histone-binding subunit that may target chromatin remodeling factors, histone acetyltransferases and histone deacetylases to their histone substrates in a manner that is regulated by nucleosomal DNA. Component of several complexes which regulate chromatin metabolism. This chain is Histone-binding protein RBBP7 (rbbp7), found in Xenopus laevis (African clawed frog).